The chain runs to 145 residues: Acidic phospholipase A2 S1-11 (145 aa).

Positions 1-19 (MYPAHLLVLLAVCVSLLGA) are cleaved as a signal peptide. Residues 20–27 (SDMPPQPL) constitute a propeptide that is removed on maturation. 5 cysteine pairs are disulfide-bonded: C38–C99, C54–C144, C56–C72, C71–C127, and C106–C118. Residues Y55, G57, and G59 each coordinate Ca(2+). H75 is a catalytic residue. D76 is a binding site for Ca(2+). Residue D121 is part of the active site.

The protein belongs to the phospholipase A2 family. Group I subfamily. D49 sub-subfamily. It depends on Ca(2+) as a cofactor. This enzyme lacks two of the seven disulfide bonds found in similar PLA2 proteins. Expressed by the venom gland.

The protein localises to the secreted. The catalysed reaction is a 1,2-diacyl-sn-glycero-3-phosphocholine + H2O = a 1-acyl-sn-glycero-3-phosphocholine + a fatty acid + H(+). Snake venom phospholipase A2 (PLA2) that inhibits collagen-induced platelet aggregation. PLA2 catalyzes the calcium-dependent hydrolysis of the 2-acyl groups in 3-sn-phosphoglycerides. The protein is Acidic phospholipase A2 S1-11 of Austrelaps superbus (Lowland copperhead snake).